The following is a 307-amino-acid chain: Transposase InsD for insertion element IS2-9 (307 aa).

The region spanning 112–295 (KPAVPPSKRA…SPREYLRQRA (184 aa)) is the Integrase catalytic domain.

Involved in the transposition of the insertion sequence IS2. This chain is Transposase InsD for insertion element IS2-9, found in Escherichia coli (strain K12).